A 392-amino-acid chain; its full sequence is p21-activated protein kinase-interacting protein 1 (392 aa).

6 WD repeats span residues 33-72 (VADF…MKKK), 73-113 (IEHG…AKKW), 114-155 (ECLK…LVEG), 156-195 (RSAF…LDTA), 196-235 (SISG…CDSL), and 236-275 (VCLC…KMWK). The tract at residues 312–392 (SLPPAAEPSP…RKKKKIKTMQ (81 aa)) is disordered. S320 bears the Phosphoserine mark. Basic and acidic residues predominate over residues 325 to 345 (EQSKIGKKEPGDTVHKEEKRS). Positions 381–392 (KKRKKKKIKTMQ) are enriched in basic residues.

In terms of assembly, interacts with PAK1. As to expression, expressed in brain, colon, heart, kidney, liver, lung, muscle, peripheral blood leukocytes, placenta, small intestine, spleen and thymus.

Its subcellular location is the nucleus. It is found in the nucleolus. Negatively regulates the PAK1 kinase. PAK1 is a member of the PAK kinase family, which has been shown to play a positive role in the regulation of signaling pathways involving MAPK8 and RELA. PAK1 exists as an inactive homodimer, which is activated by binding of small GTPases such as CDC42 to an N-terminal regulatory domain. PAK1IP1 also binds to the N-terminus of PAK1, and inhibits the specific activation of PAK1 by CDC42. May be involved in ribosomal large subunit assembly. The protein is p21-activated protein kinase-interacting protein 1 (PAK1IP1) of Homo sapiens (Human).